A 433-amino-acid chain; its full sequence is ATP-dependent protease ATPase subunit HslU (433 aa).

ATP-binding positions include Val18, 60 to 65, Asp246, Glu311, and Arg383; that span reads GVGKTE.

This sequence belongs to the ClpX chaperone family. HslU subfamily. A double ring-shaped homohexamer of HslV is capped on each side by a ring-shaped HslU homohexamer. The assembly of the HslU/HslV complex is dependent on binding of ATP.

It localises to the cytoplasm. Its function is as follows. ATPase subunit of a proteasome-like degradation complex; this subunit has chaperone activity. The binding of ATP and its subsequent hydrolysis by HslU are essential for unfolding of protein substrates subsequently hydrolyzed by HslV. HslU recognizes the N-terminal part of its protein substrates and unfolds these before they are guided to HslV for hydrolysis. This Rhodopseudomonas palustris (strain BisA53) protein is ATP-dependent protease ATPase subunit HslU.